Reading from the N-terminus, the 499-residue chain is BTB/POZ domain-containing protein 16 (499 aa).

In terms of domain architecture, BTB spans 143-199 (INDPLVTREAFATALKNLYMQEVKICLDDVLGVLAAAHILQFGSLFQRCVTVMMSGL).

This Bos taurus (Bovine) protein is BTB/POZ domain-containing protein 16 (BTBD16).